Reading from the N-terminus, the 503-residue chain is Probable cytosol aminopeptidase (503 aa).

Residues Lys-270 and Asp-275 each contribute to the Mn(2+) site. Residue Lys-282 is part of the active site. The Mn(2+) site is built by Asp-293, Asp-352, and Glu-354. Arg-356 is a catalytic residue.

It belongs to the peptidase M17 family. The cofactor is Mn(2+).

The protein localises to the cytoplasm. It catalyses the reaction Release of an N-terminal amino acid, Xaa-|-Yaa-, in which Xaa is preferably Leu, but may be other amino acids including Pro although not Arg or Lys, and Yaa may be Pro. Amino acid amides and methyl esters are also readily hydrolyzed, but rates on arylamides are exceedingly low.. The enzyme catalyses Release of an N-terminal amino acid, preferentially leucine, but not glutamic or aspartic acids.. Presumably involved in the processing and regular turnover of intracellular proteins. Catalyzes the removal of unsubstituted N-terminal amino acids from various peptides. The polypeptide is Probable cytosol aminopeptidase (Serratia proteamaculans (strain 568)).